A 148-amino-acid polypeptide reads, in one-letter code: uncharacterized protein (148 aa).

2 disordered regions span residues 1–86 and 122–148; these read MCPP…VQSP and RAHR…TSPC. The span at 38–57 shows a compositional bias: basic residues; it reads RPPKMQRRPRPPVAKRRRFP. Over residues 134–148 the composition is skewed to polar residues; the sequence is QSRQRPSPDSQTSPC.

It belongs to the Epstein-Barr virus BLLF2 family.

This is an uncharacterized protein from Homo sapiens (Human).